Consider the following 218-residue polypeptide: uncharacterized protein (218 aa).

Residues 184–202 (MDREEKRKEKEEKRKRELA) show a composition bias toward basic and acidic residues. The tract at residues 184–218 (MDREEKRKEKEEKRKRELAARQLKRQEKKKQKTSK) is disordered. Over residues 205–218 (QLKRQEKKKQKTSK) the composition is skewed to basic residues.

This is an uncharacterized protein from Mycoplasma pneumoniae (strain ATCC 29342 / M129 / Subtype 1) (Mycoplasmoides pneumoniae).